A 580-amino-acid polypeptide reads, in one-letter code: Arginine--tRNA ligase (580 aa).

The 'HIGH' region signature appears at 131–141 (ANPTGPMHVGH).

It belongs to the class-I aminoacyl-tRNA synthetase family. As to quaternary structure, monomer.

It is found in the cytoplasm. The enzyme catalyses tRNA(Arg) + L-arginine + ATP = L-arginyl-tRNA(Arg) + AMP + diphosphate. This Cereibacter sphaeroides (strain ATCC 17025 / ATH 2.4.3) (Rhodobacter sphaeroides) protein is Arginine--tRNA ligase.